A 129-amino-acid polypeptide reads, in one-letter code: C-type natriuretic peptide 1 (129 aa).

The first 24 residues, Met-1 to Gly-24, serve as a signal peptide directing secretion. The propeptide occupies Lys-25–Lys-107. A disulfide bond links Cys-113 and Cys-129.

This sequence belongs to the natriuretic peptide family.

It localises to the secreted. Its function is as follows. Hormone which plays a role in endochondral ossification through regulation of cartilaginous growth plate chondrocytes proliferation and differentiation. May also be vasoactive and natriuretic. May be important for freshwater adaptation. This is C-type natriuretic peptide 1 from Aquarana catesbeiana (American bullfrog).